Consider the following 102-residue polypeptide: uncharacterized protein (102 aa).

2 disordered regions span residues 1–21 (MKRMIRSHGRKTECQMTGAGE) and 33–71 (GSGTRRGSGANERRDSDVGPIAHSSGTRRGSANETSACT). Over 1–79 (MKRMIRSHGR…CTRTDHQKAD (79 aa)) the chain is Extracellular. Over residues 56 to 71 (SSGTRRGSANETSACT) the composition is skewed to polar residues. Asn-65 carries an N-linked (GlcNAc...) asparagine; by host glycan. Residues 80 to 97 (IGLWFMFLVFGLCSWLAM) form a helical membrane-spanning segment. The Cytoplasmic portion of the chain corresponds to 98–102 (RYRAQ).

It belongs to the HHV-5 UL15A protein family.

The protein resides in the host membrane. This is an uncharacterized protein from Human cytomegalovirus (strain Merlin) (HHV-5).